Reading from the N-terminus, the 155-residue chain is Small ribosomal subunit protein uS7c (155 aa).

The protein belongs to the universal ribosomal protein uS7 family. As to quaternary structure, part of the 30S ribosomal subunit.

The protein localises to the plastid. The protein resides in the chloroplast. Its function is as follows. One of the primary rRNA binding proteins, it binds directly to 16S rRNA where it nucleates assembly of the head domain of the 30S subunit. The chain is Small ribosomal subunit protein uS7c (rps7) from Saururus cernuus (Lizard's tail).